A 408-amino-acid chain; its full sequence is 3-phosphoshikimate 1-carboxyvinyltransferase (408 aa).

The 3-phosphoshikimate site is built by K20, S21, and R25. K20 is a phosphoenolpyruvate binding site. R111 contacts phosphoenolpyruvate. Positions 151, 152, 153, 178, 293, and 320 each coordinate 3-phosphoshikimate. Q153 lines the phosphoenolpyruvate pocket. The active-site Proton acceptor is D293. Residues R324, R365, and K389 each coordinate phosphoenolpyruvate.

Belongs to the EPSP synthase family. In terms of assembly, monomer.

It is found in the cytoplasm. It catalyses the reaction 3-phosphoshikimate + phosphoenolpyruvate = 5-O-(1-carboxyvinyl)-3-phosphoshikimate + phosphate. Its pathway is metabolic intermediate biosynthesis; chorismate biosynthesis. In terms of biological role, catalyzes the transfer of the enolpyruvyl moiety of phosphoenolpyruvate (PEP) to the 5-hydroxyl of shikimate-3-phosphate (S3P) to produce enolpyruvyl shikimate-3-phosphate and inorganic phosphate. This chain is 3-phosphoshikimate 1-carboxyvinyltransferase, found in Sulfurisphaera tokodaii (strain DSM 16993 / JCM 10545 / NBRC 100140 / 7) (Sulfolobus tokodaii).